Consider the following 253-residue polypeptide: rRNA adenine N-6-methyltransferase (253 aa).

The S-adenosyl-L-methionine site is built by N14, L16, G40, E61, D85, and N101. The disordered stretch occupies residues 229–253 (CAREESTPRPYLPDCTPTTGSISSR). Positions 244 to 253 (TPTTGSISSR) are enriched in polar residues.

It belongs to the class I-like SAM-binding methyltransferase superfamily. rRNA adenine N(6)-methyltransferase family.

Its function is as follows. Involved in erythromycin resistance. The sequence is that of rRNA adenine N-6-methyltransferase (ermA) from Corynebacterium diphtheriae.